Reading from the N-terminus, the 393-residue chain is 2-methylcitrate synthase (393 aa).

The substrate site is built by Arg92 and His207. His242 is a catalytic residue. Residue 275 to 279 (KIMGF) coordinates CoA. His281 is a catalytic residue. Arg290 provides a ligand contact to substrate. Residue Asp332 is part of the active site. The substrate site is built by Arg357 and Arg376.

The protein belongs to the citrate synthase family. As to quaternary structure, homodimer.

It catalyses the reaction propanoyl-CoA + oxaloacetate + H2O = (2S,3S)-2-methylcitrate + CoA + H(+). It carries out the reaction oxaloacetate + acetyl-CoA + H2O = citrate + CoA + H(+). Its pathway is organic acid metabolism; propanoate degradation. It functions in the pathway carbohydrate metabolism; tricarboxylic acid cycle; isocitrate from oxaloacetate: step 1/2. In terms of biological role, involved in the catabolism of short chain fatty acids (SCFA) via the tricarboxylic acid (TCA)(acetyl degradation route) and via the 2-methylcitrate cycle I (propionate degradation route). Catalyzes the Claisen condensation of propionyl-CoA and oxaloacetate (OAA) to yield 2-methylcitrate (2-MC) and CoA. Also catalyzes the condensation of oxaloacetate with acetyl-CoA. The chain is 2-methylcitrate synthase (gltA1) from Mycobacterium tuberculosis (strain ATCC 35801 / TMC 107 / Erdman).